The chain runs to 329 residues: MGATGDAEQPRGPSGAERGGLELGDAGAAGQLVLTNPWNIMIKHRQVQRRGRRSQMTTSFTDPAISMDLLRAVLQPSINEEIQTVFNKYMKFFQKAALNVRDNVGEEVDAEQLIQEACRSCLEQAKLLFSDGEKVIPRLTHELPGIKRGRQAEEECAHRGSPLPKKRKGRPPGHILSSDRAAAGMVWKPKSCEPIRREGPKWDPARLNESTTFVLGSRANKALGMGGTRGRIYIKHPHLFKYAADPQDKHWLAEPHHMRATGGKMAYLLIEEDIRDLAASDDYRGCLDLKLEELKSFVLPSWMVEKMRKYMETLRTENEHRAVEAPPQT.

Disordered stretches follow at residues 1–22 and 147–178; these read MGATGDAEQPRGPSGAERGGLE and KRGRQAEEECAHRGSPLPKKRKGRPPGHILSS. The tract at residues 56-147 is important for dimerization; that stretch reads MTTSFTDPAI…RLTHELPGIK (92 aa). The span at 147-158 shows a compositional bias: basic and acidic residues; sequence KRGRQAEEECAH. Residues 159-173 constitute a DNA-binding region (a.T hook); the sequence is RGSPLPKKRKGRPPG. Phosphoserine is present on serine 161. The Nuclear localization signal motif lies at 164–170; the sequence is PKKRKGR. The important for DNA and nucleosome binding stretch occupies residues 197–316; it reads REGPKWDPAR…MRKYMETLRT (120 aa). Residues 216–237 constitute a DNA-binding region (H-T-H motif); it reads GSRANKALGMGGTRGRIYIKHP.

In terms of assembly, monomer and homodimer. A minor proportion may form homotrimers. Interacts with ZNF541. Interacts with the terminal deoxynucleotidyltransferase DNTT. Interacts with TRERF1. Identified in a histone deacetylase complex that contains DNTTIP1, HDAC1 and MIDEAS; this complex assembles into a tetramer that contains four copies of each protein chain. Component of a histone deacetylase complex containing DNTTIP1, ZNF541, HDAC1 and HDAC2. Identified in a complex with KCTD19, HDAC1, HDAC2 and ZNF541.

It localises to the nucleus. In terms of biological role, increases DNTT terminal deoxynucleotidyltransferase activity (in vitro). Also acts as a transcriptional regulator, binding to the consensus sequence 5'-GNTGCATG-3' following an AT-tract. Associates with RAB20 promoter and positively regulates its transcription. Binds DNA and nucleosomes; may recruit HDAC1 complexes to nucleosomes or naked DNA. This Pongo abelii (Sumatran orangutan) protein is Deoxynucleotidyltransferase terminal-interacting protein 1 (DNTTIP1).